The primary structure comprises 236 residues: Zinc finger AN1 domain-containing stress-associated protein 13 (236 aa).

Disordered regions lie at residues 48–81 and 150–173; these read KEGR…PGKR and TVPE…AKTK. Polar residues predominate over residues 66–75; the sequence is RLQLPTTSIV. The AN1-type; degenerate zinc-finger motif lies at 170–216; sequence AKTKSRCAACGRRVGLMGFECRCGAVFCGAHPLLGQARLWLRLQGRA. The Zn(2+) site is built by Cys-176, Cys-179, Cys-197, and His-200.

Functionally, may be involved in environmental stress response. This Oryza sativa subsp. japonica (Rice) protein is Zinc finger AN1 domain-containing stress-associated protein 13 (SAP13).